The chain runs to 295 residues: UDP-N-acetylenolpyruvoylglucosamine reductase (295 aa).

The FAD-binding PCMH-type domain maps to Lys24 to Gly188. Arg168 is a catalytic residue. Ser217 serves as the catalytic Proton donor. Glu287 is a catalytic residue.

It belongs to the MurB family. FAD is required as a cofactor.

The protein resides in the cytoplasm. The catalysed reaction is UDP-N-acetyl-alpha-D-muramate + NADP(+) = UDP-N-acetyl-3-O-(1-carboxyvinyl)-alpha-D-glucosamine + NADPH + H(+). The protein operates within cell wall biogenesis; peptidoglycan biosynthesis. Cell wall formation. The sequence is that of UDP-N-acetylenolpyruvoylglucosamine reductase from Rickettsia massiliae (strain Mtu5).